Reading from the N-terminus, the 172-residue chain is EPIDERMAL PATTERNING FACTOR-like protein 7 (172 aa).

A signal peptide spans 1 to 27 (MDHVNPTLFHLKSLSIFTLTLLYISSP). 4 cysteine pairs are disulfide-bonded: Cys128-Cys159, Cys132-Cys138, Cys135-Cys161, and Cys147-Cys153.

This sequence belongs to the plant cysteine rich small secretory peptide family. Epidermal patterning factor subfamily.

The protein resides in the secreted. Functionally, controls stomatal patterning. In Arabidopsis thaliana (Mouse-ear cress), this protein is EPIDERMAL PATTERNING FACTOR-like protein 7.